We begin with the raw amino-acid sequence, 100 residues long: ATP phosphoribosyltransferase (100 aa).

Belongs to the ATP phosphoribosyltransferase family. Long subfamily. In terms of assembly, equilibrium between an active dimeric form, an inactive hexameric form and higher aggregates. Interconversion between the various forms is largely reversible and is influenced by the natural substrates and inhibitors of the enzyme. It depends on Mg(2+) as a cofactor.

Its subcellular location is the cytoplasm. It catalyses the reaction 1-(5-phospho-beta-D-ribosyl)-ATP + diphosphate = 5-phospho-alpha-D-ribose 1-diphosphate + ATP. Its pathway is amino-acid biosynthesis; L-histidine biosynthesis; L-histidine from 5-phospho-alpha-D-ribose 1-diphosphate: step 1/9. Feedback inhibited by histidine. Catalyzes the condensation of ATP and 5-phosphoribose 1-diphosphate to form N'-(5'-phosphoribosyl)-ATP (PR-ATP). Has a crucial role in the pathway because the rate of histidine biosynthesis seems to be controlled primarily by regulation of HisG enzymatic activity. This chain is ATP phosphoribosyltransferase (hisG), found in Klebsiella pneumoniae.